Reading from the N-terminus, the 147-residue chain is S-protein homolog 10 (147 aa).

The N-terminal stretch at 1-20 (MNCFSYFFLVIILCAGLNNA) is a signal peptide.

The protein belongs to the plant self-incompatibility (S1) protein family.

Its subcellular location is the secreted. This chain is S-protein homolog 10, found in Arabidopsis thaliana (Mouse-ear cress).